We begin with the raw amino-acid sequence, 184 residues long: Bifunctional protein PyrR (184 aa).

Residues 99–111 carry the PRPP-binding motif; it reads IVLVDDVLYTGRT.

The protein belongs to the purine/pyrimidine phosphoribosyltransferase family. PyrR subfamily. In terms of assembly, homodimer and homohexamer; in equilibrium.

It catalyses the reaction UMP + diphosphate = 5-phospho-alpha-D-ribose 1-diphosphate + uracil. Functionally, regulates transcriptional attenuation of the pyrimidine nucleotide (pyr) operon by binding in a uridine-dependent manner to specific sites on pyr mRNA. This disrupts an antiterminator hairpin in the RNA and favors formation of a downstream transcription terminator, leading to a reduced expression of downstream genes. Also displays a weak uracil phosphoribosyltransferase activity which is not physiologically significant. This chain is Bifunctional protein PyrR, found in Acetivibrio thermocellus (strain ATCC 27405 / DSM 1237 / JCM 9322 / NBRC 103400 / NCIMB 10682 / NRRL B-4536 / VPI 7372) (Clostridium thermocellum).